A 255-amino-acid chain; its full sequence is Ciliogenesis and planar polarity effector 2 (255 aa).

The interval 52-255 (PADIASYKLF…VIAGLVGGAD (204 aa)) is small GTPase-like. GTP-binding positions include 64–71 (GRSGAGKT) and 177–180 (TKLD).

This sequence belongs to the small GTPase superfamily. Rab family.

The protein resides in the cytoplasm. It is found in the cytoskeleton. It localises to the cilium basal body. Potential effector of the planar cell polarity signaling pathway. Plays a role in targeted membrane trafficking most probably at the level of vesicle fusion with membranes. Involved in cilium biogenesis by regulating the transport of cargo proteins to the basal body and to the apical tips of cilia. More generally involved in exocytosis in secretory cells. This is Ciliogenesis and planar polarity effector 2 (cplane2) from Xenopus tropicalis (Western clawed frog).